The primary structure comprises 201 residues: Protamine-like protein 99C (201 aa).

Positions 93–143 are disordered; that stretch reads GGQQSSCQRQSPSARLRESERRSSRSKTLCRSAKNRQRGKPKPQQSKRRLS. A compositionally biased stretch (polar residues) spans 94-104; that stretch reads GQQSSCQRQSP. Basic residues predominate over residues 125–143; sequence AKNRQRGKPKPQQSKRRLS.

This sequence belongs to the UPF0771 family.

Its subcellular location is the nucleus. The protein localises to the chromosome. Its function is as follows. Regulates chromatin compaction in spermatid nuclei and is essential for male fertility. Functions in parallel with other chromatin-condensing proteins such as ProtA, ProtB and Mst77F. The polypeptide is Protamine-like protein 99C (Drosophila melanogaster (Fruit fly)).